The chain runs to 207 residues: Small ribosomal subunit protein uS4A (207 aa).

The S4 RNA-binding domain occupies 98-158 (TRLDNVAYRL…EKSKSSAKFK (61 aa)).

The protein belongs to the universal ribosomal protein uS4 family. Part of the 30S ribosomal subunit. Contacts protein S5. The interaction surface between S4 and S5 is involved in control of translational fidelity.

In terms of biological role, one of the primary rRNA binding proteins, it binds directly to 16S rRNA where it nucleates assembly of the body of the 30S subunit. With S5 and S12 plays an important role in translational accuracy. This is Small ribosomal subunit protein uS4A from Alkaliphilus oremlandii (strain OhILAs) (Clostridium oremlandii (strain OhILAs)).